The following is a 396-amino-acid chain: L-lactate dehydrogenase (396 aa).

The FMN hydroxy acid dehydrogenase domain occupies 1-380; that stretch reads MIISAASDYR…TQDSLVQGLG (380 aa). Tyr-24 serves as a coordination point for substrate. FMN contacts are provided by Ser-106 and Gln-127. A substrate-binding site is contributed by Tyr-129. Thr-155 contacts FMN. Arg-164 lines the substrate pocket. Lys-251 is an FMN binding site. The active-site Proton acceptor is His-275. Substrate is bound at residue Arg-278. 306–330 contacts FMN; sequence DSGIRNGLDVVRMIALGADTVLLGR.

The protein belongs to the FMN-dependent alpha-hydroxy acid dehydrogenase family. The cofactor is FMN.

Its subcellular location is the cell inner membrane. The enzyme catalyses (S)-lactate + A = pyruvate + AH2. Functionally, catalyzes the conversion of L-lactate to pyruvate. Is coupled to the respiratory chain. The chain is L-lactate dehydrogenase from Shigella boydii serotype 18 (strain CDC 3083-94 / BS512).